The chain runs to 419 residues: Serine hydroxymethyltransferase (419 aa).

Residues Leu-118 and 122–124 each bind (6S)-5,6,7,8-tetrahydrofolate; that span reads GHL. Lys-226 carries the post-translational modification N6-(pyridoxal phosphate)lysine. Glu-242 serves as a coordination point for (6S)-5,6,7,8-tetrahydrofolate.

This sequence belongs to the SHMT family. As to quaternary structure, homodimer. The cofactor is pyridoxal 5'-phosphate.

The protein resides in the cytoplasm. The enzyme catalyses (6R)-5,10-methylene-5,6,7,8-tetrahydrofolate + glycine + H2O = (6S)-5,6,7,8-tetrahydrofolate + L-serine. Its pathway is one-carbon metabolism; tetrahydrofolate interconversion. It participates in amino-acid biosynthesis; glycine biosynthesis; glycine from L-serine: step 1/1. Functionally, catalyzes the reversible interconversion of serine and glycine with tetrahydrofolate (THF) serving as the one-carbon carrier. This reaction serves as the major source of one-carbon groups required for the biosynthesis of purines, thymidylate, methionine, and other important biomolecules. Also exhibits THF-independent aldolase activity toward beta-hydroxyamino acids, producing glycine and aldehydes, via a retro-aldol mechanism. This Metamycoplasma arthritidis (strain 158L3-1) (Mycoplasma arthritidis) protein is Serine hydroxymethyltransferase.